The sequence spans 380 residues: tRNA-specific 2-thiouridylase MnmA (380 aa).

ATP-binding positions include Gly9–Ser16 and Met35. The tract at residues Asn94–Asp96 is interaction with target base in tRNA. Cys99 acts as the Nucleophile in catalysis. A disulfide bond links Cys99 and Cys195. ATP is bound at residue Gly123. The tract at residues Lys145 to Gln147 is interaction with tRNA. The active-site Cysteine persulfide intermediate is Cys195. The segment at Arg308–Tyr309 is interaction with tRNA.

It belongs to the MnmA/TRMU family.

The protein resides in the cytoplasm. It carries out the reaction S-sulfanyl-L-cysteinyl-[protein] + uridine(34) in tRNA + AH2 + ATP = 2-thiouridine(34) in tRNA + L-cysteinyl-[protein] + A + AMP + diphosphate + H(+). Its function is as follows. Catalyzes the 2-thiolation of uridine at the wobble position (U34) of tRNA, leading to the formation of s(2)U34. The protein is tRNA-specific 2-thiouridylase MnmA of Stenotrophomonas maltophilia (strain K279a).